A 143-amino-acid polypeptide reads, in one-letter code: Transmembrane protein 207 (143 aa).

The signal sequence occupies residues 1–29 (MSTSSPFRVASKIVTAGCLCLPLFQRVLS). The helical transmembrane segment at 52-72 (IWFFLLIFLVVLLCGVVLFCL) threads the bilayer.

In terms of assembly, interacts with WWOX.

It is found in the membrane. This Mus musculus (Mouse) protein is Transmembrane protein 207.